Reading from the N-terminus, the 57-residue chain is Large ribosomal subunit protein bL32 (57 aa).

The segment at 1 to 23 (MAVPKKKTSKSKRDKRRATWRHK) is disordered.

Belongs to the bacterial ribosomal protein bL32 family.

The polypeptide is Large ribosomal subunit protein bL32 (Nostoc sp. (strain PCC 7120 / SAG 25.82 / UTEX 2576)).